We begin with the raw amino-acid sequence, 149 residues long: Calmodulin (149 aa).

Residue Ala2 is modified to N-acetylalanine. 4 consecutive EF-hand domains span residues 8-43 (EQIA…LGQN), 44-79 (PTEA…KMKD), 81-116 (DSEE…LGEK), and 117-149 (LTDE…MMSK). Positions 21, 23, 25, 27, 32, 57, 59, 61, 63, 68, 94, 96, 98, and 105 each coordinate Ca(2+). The residue at position 116 (Lys116) is an N6,N6,N6-trimethyllysine. Asp130, Asp132, Asp134, Gln136, and Glu141 together coordinate Ca(2+).

Belongs to the calmodulin family.

In terms of biological role, calmodulin mediates the control of a large number of enzymes, ion channels and other proteins by Ca(2+). Among the enzymes to be stimulated by the calmodulin-Ca(2+) complex are a number of protein kinases and phosphatases. The protein is Calmodulin of Lumbricus rubellus (Humus earthworm).